A 305-amino-acid polypeptide reads, in one-letter code: Acetyl-coenzyme A carboxylase carboxyl transferase subunit beta (305 aa).

The CoA carboxyltransferase N-terminal domain maps to 29 to 298 (LWTKCESCDA…EMKLPLLESS (270 aa)). Zn(2+)-binding residues include C33, C36, C52, and C55. Residues 33–55 (CESCDALTYTKDLQANLMVCLQC) form a C4-type zinc finger.

It belongs to the AccD/PCCB family. Acetyl-CoA carboxylase is a heterohexamer composed of biotin carboxyl carrier protein (AccB), biotin carboxylase (AccC) and two subunits each of ACCase subunit alpha (AccA) and ACCase subunit beta (AccD). Requires Zn(2+) as cofactor.

It localises to the cytoplasm. The enzyme catalyses N(6)-carboxybiotinyl-L-lysyl-[protein] + acetyl-CoA = N(6)-biotinyl-L-lysyl-[protein] + malonyl-CoA. It participates in lipid metabolism; malonyl-CoA biosynthesis; malonyl-CoA from acetyl-CoA: step 1/1. Its function is as follows. Component of the acetyl coenzyme A carboxylase (ACC) complex. Biotin carboxylase (BC) catalyzes the carboxylation of biotin on its carrier protein (BCCP) and then the CO(2) group is transferred by the transcarboxylase to acetyl-CoA to form malonyl-CoA. The protein is Acetyl-coenzyme A carboxylase carboxyl transferase subunit beta of Synechococcus sp. (strain ATCC 27144 / PCC 6301 / SAUG 1402/1) (Anacystis nidulans).